The chain runs to 325 residues: Beta-ketoacyl-[acyl-carrier-protein] synthase III (325 aa).

Catalysis depends on residues cysteine 112 and histidine 250. The segment at 251–255 (QANSR) is ACP-binding. Residue asparagine 280 is part of the active site.

It belongs to the thiolase-like superfamily. FabH family. Homodimer.

The protein localises to the cytoplasm. The enzyme catalyses malonyl-[ACP] + acetyl-CoA + H(+) = 3-oxobutanoyl-[ACP] + CO2 + CoA. It functions in the pathway lipid metabolism; fatty acid biosynthesis. Catalyzes the condensation reaction of fatty acid synthesis by the addition to an acyl acceptor of two carbons from malonyl-ACP. Catalyzes the first condensation reaction which initiates fatty acid synthesis and may therefore play a role in governing the total rate of fatty acid production. Possesses both acetoacetyl-ACP synthase and acetyl transacylase activities. Its substrate specificity determines the biosynthesis of branched-chain and/or straight-chain of fatty acids. The chain is Beta-ketoacyl-[acyl-carrier-protein] synthase III from Lactococcus lactis subsp. cremoris (strain MG1363).